Reading from the N-terminus, the 95-residue chain is MKICGPKLSLCGLIISVWGIVQLVLMGLFFYINSVALIEDLPLEEEYHSLEDFYAAANRAYNQNAYNCWIAACIYVLTLLLSAQQFYMNSRVTAN.

The next 2 membrane-spanning stretches (helical) occupy residues 12-32 and 68-88; these read GLIISVWGIVQLVLMGLFFYI and CWIAACIYVLTLLLSAQQFYM.

Belongs to the RNase K family.

It is found in the membrane. In terms of biological role, endoribonuclease. (Microbial infection) Required for the initial stages of clathrin-mediated endocytic uptake of a diverse set of flaviviruses, including dengue and West Nile. Not required for clathrin-mediated endocytosis and macropinocytosis. The polypeptide is Ribonuclease kappa (Drosophila melanogaster (Fruit fly)).